The sequence spans 513 residues: Maturase K (513 aa).

It belongs to the intron maturase 2 family. MatK subfamily.

Its subcellular location is the plastid. The protein localises to the chloroplast. Functionally, usually encoded in the trnK tRNA gene intron. Probably assists in splicing its own and other chloroplast group II introns. The polypeptide is Maturase K (Keckiella cordifolia (Heart-leafed penstemon)).